The chain runs to 314 residues: Glycine--tRNA ligase alpha subunit (314 aa).

The protein belongs to the class-II aminoacyl-tRNA synthetase family. As to quaternary structure, tetramer of two alpha and two beta subunits.

The protein resides in the cytoplasm. It catalyses the reaction tRNA(Gly) + glycine + ATP = glycyl-tRNA(Gly) + AMP + diphosphate. This is Glycine--tRNA ligase alpha subunit from Mesorhizobium japonicum (strain LMG 29417 / CECT 9101 / MAFF 303099) (Mesorhizobium loti (strain MAFF 303099)).